Reading from the N-terminus, the 231-residue chain is NADH-ubiquinone oxidoreductase chain 4 (231 aa).

The next 6 helical transmembrane spans lie at 1–21 (PIAG…YGII), 34–54 (MFLP…LTCL), 63–85 (IAYS…TPWG), 89–111 (GMTL…NTTY), 118–138 (ILIL…WWLL), and 156–176 (LLIM…LGLS).

Belongs to the complex I subunit 4 family.

It is found in the mitochondrion membrane. It carries out the reaction a ubiquinone + NADH + 5 H(+)(in) = a ubiquinol + NAD(+) + 4 H(+)(out). Core subunit of the mitochondrial membrane respiratory chain NADH dehydrogenase (Complex I) that is believed to belong to the minimal assembly required for catalysis. Complex I functions in the transfer of electrons from NADH to the respiratory chain. The immediate electron acceptor for the enzyme is believed to be ubiquinone. The protein is NADH-ubiquinone oxidoreductase chain 4 (MT-ND4) of Calloselasma rhodostoma (Malayan pit viper).